A 938-amino-acid chain; its full sequence is Glutamate receptor ionotropic, NMDA 1 (938 aa).

Residues 1–18 (MSTMHLLTFALLFSCSFA) form the signal peptide. Over 19 to 559 (RAACDPKIVN…TLDSFMQPFQ (541 aa)) the chain is Extracellular. 10 N-linked (GlcNAc...) asparagine glycosylation sites follow: Asn61, Asn203, Asn239, Asn276, Asn300, Asn350, Asn368, Asn440, Asn471, and Asn491. Cysteines 79 and 308 form a disulfide. Disulfide bonds link Cys420-Cys454 and Cys436-Cys455. Positions 516, 518, and 523 each coordinate glycine. A helical transmembrane segment spans residues 560–580 (STLWLLVGLSVHVVAVMLYLL). Residues 581-602 (DRFSPFGRFKVNSEEEEEDALT) are Cytoplasmic-facing. An intramembrane region (discontinuously helical) is located at residues 603–624 (LSSAMWFSWGVLLNSGIGEGAP). The segment at 603–624 (LSSAMWFSWGVLLNSGIGEGAP) is pore-forming. At 625–630 (RSFSAR) the chain is on the cytoplasmic side. A helical transmembrane segment spans residues 631-647 (ILGMVWAGFAMIIVASY). Residues 648–812 (TANLAAFLVL…NAPATLTFEN (165 aa)) lie on the Extracellular side of the membrane. Asn674 is a glycosylation site (N-linked (GlcNAc...) asparagine). Residues Ser688 and Asp732 each contribute to the glycine site. Cys744 and Cys798 are disulfide-bonded. Asn771 carries an N-linked (GlcNAc...) asparagine glycan. A helical membrane pass occupies residues 813–833 (MAGVFMLVAGGIVAGIFLIFI). Over 834–938 (EIAYKRHKDA…LQLCSRHRES (105 aa)) the chain is Cytoplasmic. Lys877 bears the Phosphoserine mark. Phosphoserine; by PKC occurs at positions 889, 890, 896, and 897. Residues 889-938 (SSFKRRRSSKDTSTGGGRGALQNQKDTVLPRRAIEREEGQLQLCSRHRES) form a disordered region. Phosphoserine is present on Lys898. The segment covering 916 to 927 (VLPRRAIEREEG) has biased composition (basic and acidic residues).

This sequence belongs to the glutamate-gated ion channel (TC 1.A.10.1) family. NR1/GRIN1 subfamily. As to quaternary structure, heterotetramer; the NMDAR subunits are modular and harbor tiered domains that function in concert to regulate opening and closing of the cation-selective ion channel pore. Forms heterotetrameric channels composed of two GluN1/zeta subunits (GRIN1), and two identical GluN2/epsilon subunits (GRIN2A, GRIN2B, GRIN2C or GRIN2D) or GluN3 subunits (GRIN3A or GRIN3B) (in vitro). Can also form heterotetrameric channels that contain at least two GluN1 subunits and at least two different GluN2 subunits (or a combination of one GluN2 and one GluN3 subunits) (in vitro). In vivo, the subunit composition may vary in function of the expression levels of the different subunits. Found in a complex with GRIN2A or GRIN2B, GRIN3A and PPP2CB. Found in a complex with GRIN2A or GRIN2B and GRIN3B;. Interacts with SNX27 (via PDZ domain); the interaction is required for recycling to the plasma membrane when endocytosed and prevent degradation in lysosomes. Interacts with DLG4 and MPDZ. Interacts with LRFN1 and LRFN2. Interacts with MYZAP. Found in a complex with DLG4 and PRR7. Found in a complex with GRIN2B and PRR7. Interacts with PRR7; the interaction is reduced following NMDA receptor activity. NMDA is probably regulated by C-terminal phosphorylation of an isoform of NR1 by PKC. Dephosphorylated on Ser-897 probably by protein phosphatase 2A (PPP2CB). Its phosphorylated state is influenced by the formation of the NMDAR-PPP2CB complex and the NMDAR channel activity. Detected throughout the brain, in brain cortex, cerebellum, thalamus and olfactory bulb.

Its subcellular location is the cell membrane. It localises to the postsynaptic cell membrane. The protein localises to the synaptic cell membrane. It is found in the postsynaptic density membrane. The enzyme catalyses Ca(2+)(in) = Ca(2+)(out). The catalysed reaction is Na(+)(in) = Na(+)(out). It carries out the reaction K(+)(in) = K(+)(out). With respect to regulation, NMDA glutamate receptor activity is potentiated by Zn2(+) in a dose-dependent fashion. The potentiating effect of Zn2(+) is at submicromolar concentrations and its inhibitory action is at high micromolar to millimolar concentrations. Excitatory glycine receptors are inhibited by D-serine at 100uM. In terms of biological role, component of N-methyl-D-aspartate (NMDA) receptors (NMDARs) that function as heterotetrameric, ligand-gated cation channels with high calcium permeability and voltage-dependent block by Mg(2+). NMDARs participate in synaptic plasticity for learning and memory formation by contributing to the long-term potentiation (LTP). Channel activation requires binding of the neurotransmitter L-glutamate to the GluN2 subunit, glycine or D-serine binding to the GluN1 subunit, plus membrane depolarization to eliminate channel inhibition by Mg(2+). NMDARs mediate simultaneously the potasium efflux and the influx of calcium and sodium. Each GluN2 or GluN3 subunit confers differential attributes to channel properties, including activation, deactivation and desensitization kinetics, pH sensitivity, Ca2(+) permeability, and binding to allosteric modulators. Forms excitatory glycinergic receptor complexes with GluN3 alone which are activated by glycine binding to the GluN1 and GluN3 subunits. The polypeptide is Glutamate receptor ionotropic, NMDA 1 (Rattus norvegicus (Rat)).